The following is a 225-amino-acid chain: Transmembrane emp24 domain-containing protein p24delta11 (225 aa).

Residues 1–35 (MDLLPSRYKIHKTKLRWILTMMTMMMMMVMRRGES) form the signal peptide. At 36–193 (MRLDMESGNT…ELNRSTNSRM (158 aa)) the chain is on the lumenal side. A GOLD domain is found at 45 to 160 (TKCISDDIKT…ITMLEVEVRK (116 aa)). Positions 175 to 188 (LIEREREMQELNRS) form a coiled coil. R178 is modified (omega-N-methylated arginine). N-linked (GlcNAc...) asparagine glycosylation occurs at N186. The chain crosses the membrane as a helical span at residues 194 to 210 (AALSLLSFVVTMSVAGL). The Cytoplasmic segment spans residues 211-225 (QLRHLKSFLERKKLL). Positions 218–219 (FL) match the COPII vesicle coat-binding motif. Residues 218 to 225 (FLERKKLL) carry the COPI vesicle coat-binding motif.

This sequence belongs to the EMP24/GP25L family. As to quaternary structure, probably oligomerizes with other members of the EMP24/GP25L family. Associates with the COPI vesicle coat (coatomer). Associates with the COPII vesicle coat (coatomer).

Its subcellular location is the endoplasmic reticulum membrane. It is found in the golgi apparatus. It localises to the cis-Golgi network membrane. The protein resides in the golgi stack membrane. Involved in vesicular protein trafficking. Mainly functions in the early secretory pathway. Thought to act as cargo receptor at the lumenal side for incorporation of secretory cargo molecules into transport vesicles and to be involved in vesicle coat formation at the cytoplasmic side. The chain is Transmembrane emp24 domain-containing protein p24delta11 from Arabidopsis thaliana (Mouse-ear cress).